Consider the following 699-residue polypeptide: Receptor-type tyrosine-protein phosphatase epsilon (699 aa).

A signal peptide spans M1–A19. Low complexity predominate over residues G20–T36. Residues G20–P40 form a disordered region. Residues G20–S45 lie on the Extracellular side of the membrane. Residues N23 and N31 are each glycosylated (N-linked (GlcNAc...) asparagine). The chain crosses the membrane as a helical span at residues Q46–F68. Topologically, residues R69 to K699 are cytoplasmic. Tyrosine-protein phosphatase domains lie at F134 to Y393 and L425 to F688. Residues D302, C334 to R340, and Q378 each bind substrate. C334 serves as the catalytic Phosphocysteine intermediate. The Phosphocysteine intermediate role is filled by C629. Y695 is modified (phosphotyrosine).

This sequence belongs to the protein-tyrosine phosphatase family. Receptor class 4 subfamily. As to quaternary structure, monomer. Isoform 2: Homodimer. Can form oligomers. Dimerization is increased by oxidative stress and decreased by EGFR. Isoform 2 interacts with GRB2. A catalytically active cytoplasmic form (p65) is produced by proteolytic cleavage of either isoform 1, isoform 2 or isoform 3. In terms of processing, phosphorylated on tyrosine residues by tyrosine kinase Neu. Post-translationally, glycosylated. Isoform 2 is expressed in the spleen and thymus (at protein level). Detected in fibroblasts, myeloid cells, macrophages, and T-cells but not in B-cell lines. Isoform 1 and isoform 2 are expressed predominantly in the brain, testes, and lungs, with lower levels present in lymph nodes, thymus, spleen, heart and mammary glands. Isoform 1 is expressed in osteoclasts and not in osteoblasts and its expression is related to osteoclast differentiation. It is also expressed in the erythrocytes. Isoform 2 is strongly expressed in skeletal muscle and L6 skeletal muscle cell line.

The protein localises to the cell membrane. The protein resides in the cytoplasm. It catalyses the reaction O-phospho-L-tyrosyl-[protein] + H2O = L-tyrosyl-[protein] + phosphate. With respect to regulation, inhibited by alendronate (ALN), orthovanadate, and phenylarsine oxide (PAO). In terms of biological role, acts as a negative regulator of insulin receptor (IR) signaling and is involved in insulin-induced glucose metabolism mainly through direct dephosphorylation and inactivation of IR in hepatocytes and liver. Plays a critical role in signaling transduction pathways and phosphoprotein network topology in red blood cells. May play a role in osteoclast formation and function. Functionally, acts as a negative regulator of insulin receptor (IR) signaling in skeletal muscle. Regulates insulin-induced tyrosine phosphorylation of insulin receptor (IR) and insulin receptor substrate 1 (IRS-1), phosphorylation of protein kinase B and glycogen synthase kinase-3 and insulin induced stimulation of glucose uptake. Isoform 1 and isoform 2 act as a negative regulator of FceRI-mediated signal transduction leading to cytokine production and degranulation, most likely by acting at the level of SYK to affect downstream events such as phosphorylation of SLP76 and LAT and mobilization of Ca(2+). This is Receptor-type tyrosine-protein phosphatase epsilon (Ptpre) from Mus musculus (Mouse).